The chain runs to 228 residues: Ornithine decarboxylase antizyme 1 (228 aa).

Positions 17–55 (REKEGDKPSATIHASRTMPLLSLHSRGGSSSESSRVSLH) are disordered. Residues 36 to 55 (LLSLHSRGGSSSESSRVSLH) show a composition bias toward low complexity.

The protein belongs to the ODC antizyme family. Interacts with ODC1 and thereby sterically blocks ODC homodimerization. Forms a ternary complex with PSMB4 and OAZ1 before PSMB4 is incorporated into the 20S proteasome. Interacts with AZIN2; this interaction disrupts the interaction between the antizyme and ODC1. Interacts with FAM171A1.

Its function is as follows. Ornithine decarboxylase (ODC) antizyme protein that negatively regulates ODC activity and intracellular polyamine biosynthesis and uptake in response to increased intracellular polyamine levels. Binds to ODC monomers, inhibiting the assembly of the functional ODC homodimer, and targets the monomers for ubiquitin-independent proteolytic destruction by the 26S proteasome. Triggers ODC degradation by inducing the exposure of a cryptic proteasome-interacting surface of ODC. Stabilizes AZIN2 by interfering with its ubiquitination. Also inhibits cellular uptake of polyamines by inactivating the polyamine uptake transporter. SMAD1/OAZ1/PSMB4 complex mediates the degradation of the CREBBP/EP300 repressor SNIP1. Involved in the translocation of AZIN2 from ER-Golgi intermediate compartment (ERGIC) to the cytosol. The sequence is that of Ornithine decarboxylase antizyme 1 (OAZ1) from Homo sapiens (Human).